The chain runs to 173 residues: Shikimate kinase 1 (173 aa).

ATP is bound at residue 14 to 19 (GAGKST). Position 18 (serine 18) interacts with Mg(2+). Substrate-binding residues include aspartate 36, arginine 60, and glycine 82. Arginine 120 serves as a coordination point for ATP. Arginine 140 contributes to the substrate binding site. Glutamine 157 is a binding site for ATP.

This sequence belongs to the shikimate kinase family. As to quaternary structure, monomer. The cofactor is Mg(2+).

The protein resides in the cytoplasm. The catalysed reaction is shikimate + ATP = 3-phosphoshikimate + ADP + H(+). The protein operates within metabolic intermediate biosynthesis; chorismate biosynthesis; chorismate from D-erythrose 4-phosphate and phosphoenolpyruvate: step 5/7. Its function is as follows. Catalyzes the specific phosphorylation of the 3-hydroxyl group of shikimic acid using ATP as a cosubstrate. The chain is Shikimate kinase 1 from Serratia proteamaculans (strain 568).